The following is a 372-amino-acid chain: tRNA-specific 2-thiouridylase MnmA (372 aa).

ATP is bound by residues 9 to 16 (GMSGGVDS) and Met35. Residues 95-97 (NPD) are interaction with target base in tRNA. Catalysis depends on Cys100, which acts as the Nucleophile. An intrachain disulfide couples Cys100 to Cys201. An ATP-binding site is contributed by Gly124. Residues 151–153 (KDQ) are interaction with tRNA. Residue Cys201 is the Cysteine persulfide intermediate of the active site. The segment at 317–318 (RY) is interaction with tRNA.

It belongs to the MnmA/TRMU family.

Its subcellular location is the cytoplasm. The catalysed reaction is S-sulfanyl-L-cysteinyl-[protein] + uridine(34) in tRNA + AH2 + ATP = 2-thiouridine(34) in tRNA + L-cysteinyl-[protein] + A + AMP + diphosphate + H(+). Its function is as follows. Catalyzes the 2-thiolation of uridine at the wobble position (U34) of tRNA, leading to the formation of s(2)U34. The polypeptide is tRNA-specific 2-thiouridylase MnmA (Janthinobacterium sp. (strain Marseille) (Minibacterium massiliensis)).